The sequence spans 104 residues: Pyrimidine/purine nucleoside phosphorylase (104 aa).

The protein belongs to the nucleoside phosphorylase PpnP family.

It carries out the reaction a purine D-ribonucleoside + phosphate = a purine nucleobase + alpha-D-ribose 1-phosphate. The catalysed reaction is adenosine + phosphate = alpha-D-ribose 1-phosphate + adenine. It catalyses the reaction cytidine + phosphate = cytosine + alpha-D-ribose 1-phosphate. The enzyme catalyses guanosine + phosphate = alpha-D-ribose 1-phosphate + guanine. It carries out the reaction inosine + phosphate = alpha-D-ribose 1-phosphate + hypoxanthine. The catalysed reaction is thymidine + phosphate = 2-deoxy-alpha-D-ribose 1-phosphate + thymine. It catalyses the reaction uridine + phosphate = alpha-D-ribose 1-phosphate + uracil. The enzyme catalyses xanthosine + phosphate = alpha-D-ribose 1-phosphate + xanthine. Its function is as follows. Catalyzes the phosphorolysis of diverse nucleosides, yielding D-ribose 1-phosphate and the respective free bases. Can use uridine, adenosine, guanosine, cytidine, thymidine, inosine and xanthosine as substrates. Also catalyzes the reverse reactions. The chain is Pyrimidine/purine nucleoside phosphorylase from Thiobacillus denitrificans (strain ATCC 25259 / T1).